Reading from the N-terminus, the 242-residue chain is 4-hydroxy-tetrahydrodipicolinate reductase (242 aa).

NAD(+) is bound by residues 8–13 (GSNGRM), 75–77 (GTT), and 99–102 (ATNM). Residue histidine 131 is the Proton donor/acceptor of the active site. Histidine 132 provides a ligand contact to (S)-2,3,4,5-tetrahydrodipicolinate. Lysine 135 serves as the catalytic Proton donor. A (S)-2,3,4,5-tetrahydrodipicolinate-binding site is contributed by 141-142 (GT).

The protein belongs to the DapB family.

The protein localises to the cytoplasm. It carries out the reaction (S)-2,3,4,5-tetrahydrodipicolinate + NAD(+) + H2O = (2S,4S)-4-hydroxy-2,3,4,5-tetrahydrodipicolinate + NADH + H(+). The enzyme catalyses (S)-2,3,4,5-tetrahydrodipicolinate + NADP(+) + H2O = (2S,4S)-4-hydroxy-2,3,4,5-tetrahydrodipicolinate + NADPH + H(+). It functions in the pathway amino-acid biosynthesis; L-lysine biosynthesis via DAP pathway; (S)-tetrahydrodipicolinate from L-aspartate: step 4/4. Functionally, catalyzes the conversion of 4-hydroxy-tetrahydrodipicolinate (HTPA) to tetrahydrodipicolinate. The protein is 4-hydroxy-tetrahydrodipicolinate reductase of Campylobacter lari (strain RM2100 / D67 / ATCC BAA-1060).